Here is a 457-residue protein sequence, read N- to C-terminus: tRNA modification GTPase MnmE (457 aa).

R22, E86, and R125 together coordinate (6S)-5-formyl-5,6,7,8-tetrahydrofolate. Residues 221 to 381 (GLRAVLAGRP…LEAEVARVAG (161 aa)) form the TrmE-type G domain. A K(+)-binding site is contributed by N231. GTP is bound by residues 231 to 236 (NVGKSS), 250 to 256 (TPIPGTT), and 275 to 278 (DTAG). Mg(2+) is bound at residue S235. Residues T250, I252, and T255 each coordinate K(+). Residue T256 coordinates Mg(2+). K457 lines the (6S)-5-formyl-5,6,7,8-tetrahydrofolate pocket.

The protein belongs to the TRAFAC class TrmE-Era-EngA-EngB-Septin-like GTPase superfamily. TrmE GTPase family. Homodimer. Heterotetramer of two MnmE and two MnmG subunits. It depends on K(+) as a cofactor.

The protein localises to the cytoplasm. Exhibits a very high intrinsic GTPase hydrolysis rate. Involved in the addition of a carboxymethylaminomethyl (cmnm) group at the wobble position (U34) of certain tRNAs, forming tRNA-cmnm(5)s(2)U34. The sequence is that of tRNA modification GTPase MnmE from Symbiobacterium thermophilum (strain DSM 24528 / JCM 14929 / IAM 14863 / T).